Here is a 230-residue protein sequence, read N- to C-terminus: Ribonuclease 3 (230 aa).

The 130-residue stretch at glutamate 5–glycine 134 folds into the RNase III domain. Glutamate 47 provides a ligand contact to Mg(2+). Residue aspartate 51 is part of the active site. Mg(2+)-binding residues include aspartate 120 and glutamate 123. The active site involves glutamate 123. Residues aspartate 160–glutamate 229 form the DRBM domain.

The protein belongs to the ribonuclease III family. As to quaternary structure, homodimer. Mg(2+) serves as cofactor.

Its subcellular location is the cytoplasm. It catalyses the reaction Endonucleolytic cleavage to 5'-phosphomonoester.. Its function is as follows. Digests double-stranded RNA. Involved in the processing of primary rRNA transcript to yield the immediate precursors to the large and small rRNAs (23S and 16S). Processes some mRNAs, and tRNAs when they are encoded in the rRNA operon. Processes pre-crRNA and tracrRNA of type II CRISPR loci if present in the organism. In Streptococcus uberis (strain ATCC BAA-854 / 0140J), this protein is Ribonuclease 3.